A 435-amino-acid polypeptide reads, in one-letter code: Matrix extracellular phosphoglycoprotein (435 aa).

Residues Met-1–Ala-16 form the signal peptide. A glycan (N-linked (GlcNAc...) asparagine) is linked at Asn-71. Disordered regions lie at residues Leu-124 to Leu-145 and Leu-166 to Asp-435. The tract at residues Pro-164–His-186 is dentonin. A Cell attachment site motif is present at residues Arg-169–Asp-171. The O-linked (Xyl...) (chondroitin sulfate) serine glycan is linked to Ser-178. 2 stretches are compositionally biased toward basic and acidic residues: residues Lys-267 to Arg-278 and Ser-300 to Gly-313. Over residues Gly-337–Gln-346 the composition is skewed to polar residues. 2 stretches are compositionally biased toward basic residues: residues Ala-382–Arg-391 and Arg-405–Thr-415. The interval Arg-418–Asp-435 is ASARM motif; interaction with PHEX. Low complexity predominate over residues Glu-422–Asp-435.

This sequence belongs to the PF07175/osteoregulin family. Interacts (via ASARM motif) with PHEX; the interaction is zinc-dependent. In terms of processing, phosphorylated on serine residues in the ASARM motif; the phosphorylation is important for the inhibition of bone mineralization. Cleaved by CTSB/cathepsin B; the cleavage is blocked by metalloprotease PHEX. Expressed in osteoblasts and osteocytes.

It localises to the secreted. Its subcellular location is the extracellular space. It is found in the extracellular matrix. Regulates renal phosphate excretion. Regulates bone mineralization by osteoblasts and cartilage mineralization by chondrocytes. Regulates the mineralization of the extracellular matrix of the craniofacial complex, such as teeth, bone and cartilage. Increases dental pulp stem cell proliferation. The chain is Matrix extracellular phosphoglycoprotein from Rattus norvegicus (Rat).